The chain runs to 123 residues: Large ribosomal subunit protein bL19 (123 aa).

The protein belongs to the bacterial ribosomal protein bL19 family.

Its function is as follows. This protein is located at the 30S-50S ribosomal subunit interface and may play a role in the structure and function of the aminoacyl-tRNA binding site. The chain is Large ribosomal subunit protein bL19 from Laribacter hongkongensis (strain HLHK9).